A 418-amino-acid polypeptide reads, in one-letter code: Serine--tRNA ligase (418 aa).

231–233 (TAE) serves as a coordination point for L-serine. An ATP-binding site is contributed by 262–264 (RSE). Glu285 is a binding site for L-serine. ATP is bound at residue 349 to 352 (EISS). L-serine is bound at residue Ser385.

The protein belongs to the class-II aminoacyl-tRNA synthetase family. Type-1 seryl-tRNA synthetase subfamily. In terms of assembly, homodimer. The tRNA molecule binds across the dimer.

It is found in the cytoplasm. The catalysed reaction is tRNA(Ser) + L-serine + ATP = L-seryl-tRNA(Ser) + AMP + diphosphate + H(+). It catalyses the reaction tRNA(Sec) + L-serine + ATP = L-seryl-tRNA(Sec) + AMP + diphosphate + H(+). It functions in the pathway aminoacyl-tRNA biosynthesis; selenocysteinyl-tRNA(Sec) biosynthesis; L-seryl-tRNA(Sec) from L-serine and tRNA(Sec): step 1/1. Catalyzes the attachment of serine to tRNA(Ser). Is also able to aminoacylate tRNA(Sec) with serine, to form the misacylated tRNA L-seryl-tRNA(Sec), which will be further converted into selenocysteinyl-tRNA(Sec). This is Serine--tRNA ligase from Ureaplasma parvum serovar 3 (strain ATCC 27815 / 27 / NCTC 11736).